Consider the following 143-residue polypeptide: Nucleoside diphosphate kinase (143 aa).

ATP is bound by residues lysine 11, phenylalanine 59, arginine 87, threonine 93, arginine 104, and asparagine 114. Histidine 117 acts as the Pros-phosphohistidine intermediate in catalysis.

Belongs to the NDK family. As to quaternary structure, homotetramer. Mg(2+) is required as a cofactor.

The protein localises to the cytoplasm. It catalyses the reaction a 2'-deoxyribonucleoside 5'-diphosphate + ATP = a 2'-deoxyribonucleoside 5'-triphosphate + ADP. The enzyme catalyses a ribonucleoside 5'-diphosphate + ATP = a ribonucleoside 5'-triphosphate + ADP. Functionally, major role in the synthesis of nucleoside triphosphates other than ATP. The ATP gamma phosphate is transferred to the NDP beta phosphate via a ping-pong mechanism, using a phosphorylated active-site intermediate. The protein is Nucleoside diphosphate kinase of Edwardsiella ictaluri (strain 93-146).